A 376-amino-acid chain; its full sequence is MYG1 exonuclease (376 aa).

Residues 1 to 47 constitute a mitochondrion transit peptide; that stretch reads MGHRFLRGLLTLLLPPPPLYTRHRMLGPESVPPPKRSRSKLMAPPRI. Ser120 is subject to Phosphoserine. 2 positions are modified to N6-acetyllysine: Lys267 and Lys273.

Belongs to the MYG1 family. In terms of tissue distribution, ubiquitously expressed, with highest levels in testis.

It is found in the nucleus. The protein resides in the nucleoplasm. It localises to the mitochondrion matrix. The protein localises to the nucleolus. Functionally, 3'-5' RNA exonuclease which cleaves in situ on specific transcripts in both nucleus and mitochondrion. Involved in regulating spatially segregated organellar RNA processing, acts as a coordinator of nucleo-mitochondrial crosstalk. In nucleolus, processes pre-ribosomal RNA involved in ribosome assembly and alters cytoplasmic translation. In mitochondrial matrix, processes 3'-termini of the mito-ribosomal and messenger RNAs and controls translation of mitochondrial proteins. In Homo sapiens (Human), this protein is MYG1 exonuclease.